Consider the following 430-residue polypeptide: Serine--tRNA ligase (430 aa).

237–239 (TAE) contributes to the L-serine binding site. Position 268–270 (268–270 (RSE)) interacts with ATP. Glu-291 is an L-serine binding site. ATP is bound at residue 355–358 (EISS). Ser-391 serves as a coordination point for L-serine.

Belongs to the class-II aminoacyl-tRNA synthetase family. Type-1 seryl-tRNA synthetase subfamily. As to quaternary structure, homodimer. The tRNA molecule binds across the dimer.

It localises to the cytoplasm. It catalyses the reaction tRNA(Ser) + L-serine + ATP = L-seryl-tRNA(Ser) + AMP + diphosphate + H(+). The catalysed reaction is tRNA(Sec) + L-serine + ATP = L-seryl-tRNA(Sec) + AMP + diphosphate + H(+). It participates in aminoacyl-tRNA biosynthesis; selenocysteinyl-tRNA(Sec) biosynthesis; L-seryl-tRNA(Sec) from L-serine and tRNA(Sec): step 1/1. Its function is as follows. Catalyzes the attachment of serine to tRNA(Ser). Is also able to aminoacylate tRNA(Sec) with serine, to form the misacylated tRNA L-seryl-tRNA(Sec), which will be further converted into selenocysteinyl-tRNA(Sec). This Klebsiella pneumoniae subsp. pneumoniae (strain ATCC 700721 / MGH 78578) protein is Serine--tRNA ligase.